Here is a 244-residue protein sequence, read N- to C-terminus: NAD-dependent protein deacylase SIR2rp3 (244 aa).

Positions 1–239 constitute a Deacetylase sirtuin-type domain; sequence MRRPNGMIAI…PAWADEVLHG (239 aa). 13-32 is an NAD(+) binding site; that stretch reads GAGISAESGISTFRDQNGLW. Substrate contacts are provided by Y57 and R60. 95 to 98 is a binding site for NAD(+); that stretch reads QNID. Catalysis depends on H113, which acts as the Proton acceptor. Residues C121 and C141 each coordinate Zn(2+). Residues 181 to 183 and A225 each bind NAD(+); that span reads GTS.

It belongs to the sirtuin family. Class III subfamily. It depends on Zn(2+) as a cofactor.

It is found in the mitochondrion. It carries out the reaction N(6)-malonyl-L-lysyl-[protein] + NAD(+) + H2O = 2''-O-malonyl-ADP-D-ribose + nicotinamide + L-lysyl-[protein]. The enzyme catalyses N(6)-succinyl-L-lysyl-[protein] + NAD(+) + H2O = 2''-O-succinyl-ADP-D-ribose + nicotinamide + L-lysyl-[protein]. It catalyses the reaction N(6)-glutaryl-L-lysyl-[protein] + NAD(+) + H2O = 2''-O-glutaryl-ADP-D-ribose + nicotinamide + L-lysyl-[protein]. In terms of biological role, NAD-dependent lysine demalonylase, desuccinylase and deglutarylase that specifically removes malonyl, succinyl and glutaryl groups on target proteins. Has weak NAD-dependent protein deacetylase activity; however this activity may not be physiologically relevant in vivo. The chain is NAD-dependent protein deacylase SIR2rp3 (SIR2rp3) from Trypanosoma brucei brucei (strain 927/4 GUTat10.1).